The sequence spans 283 residues: Elongation factor Ts (283 aa).

The tract at residues 80–83 (TDFV) is involved in Mg(2+) ion dislocation from EF-Tu.

It belongs to the EF-Ts family.

The protein localises to the cytoplasm. Its function is as follows. Associates with the EF-Tu.GDP complex and induces the exchange of GDP to GTP. It remains bound to the aminoacyl-tRNA.EF-Tu.GTP complex up to the GTP hydrolysis stage on the ribosome. This is Elongation factor Ts from Pectobacterium atrosepticum (strain SCRI 1043 / ATCC BAA-672) (Erwinia carotovora subsp. atroseptica).